Reading from the N-terminus, the 394-residue chain is Chaperone protein DnaJ (394 aa).

Residues 5-75 (DYYEVLGVDK…EKKQQYDQFG (71 aa)) form the J domain. The segment at 150-231 (GVEKTIKYKR…CRGTGTAKET (82 aa)) adopts a CR-type zinc-finger fold. C163, C166, C179, C182, C205, C208, C219, and C222 together coordinate Zn(2+). 4 CXXCXGXG motif repeats span residues 163–170 (CEHCHGTG), 179–186 (CPTCNGQG), 205–212 (CPDCHGTG), and 219–226 (CKHCRGTG).

This sequence belongs to the DnaJ family. In terms of assembly, homodimer. It depends on Zn(2+) as a cofactor.

It is found in the cytoplasm. Participates actively in the response to hyperosmotic and heat shock by preventing the aggregation of stress-denatured proteins and by disaggregating proteins, also in an autonomous, DnaK-independent fashion. Unfolded proteins bind initially to DnaJ; upon interaction with the DnaJ-bound protein, DnaK hydrolyzes its bound ATP, resulting in the formation of a stable complex. GrpE releases ADP from DnaK; ATP binding to DnaK triggers the release of the substrate protein, thus completing the reaction cycle. Several rounds of ATP-dependent interactions between DnaJ, DnaK and GrpE are required for fully efficient folding. Also involved, together with DnaK and GrpE, in the DNA replication of plasmids through activation of initiation proteins. This chain is Chaperone protein DnaJ, found in Fusobacterium nucleatum subsp. polymorphum (Fusobacterium polymorphum).